Here is a 502-residue protein sequence, read N- to C-terminus: ATP synthase subunit alpha (502 aa).

The segment at 115-138 is disordered; it reads VDGLGPIETTETRPIESPAPGVMD. 169 to 176 lines the ATP pocket; sequence GDRQTGKT.

Belongs to the ATPase alpha/beta chains family. F-type ATPases have 2 components, CF(1) - the catalytic core - and CF(0) - the membrane proton channel. CF(1) has five subunits: alpha(3), beta(3), gamma(1), delta(1), epsilon(1). CF(0) has three main subunits: a(1), b(2) and c(9-12). The alpha and beta chains form an alternating ring which encloses part of the gamma chain. CF(1) is attached to CF(0) by a central stalk formed by the gamma and epsilon chains, while a peripheral stalk is formed by the delta and b chains.

It localises to the cell membrane. The enzyme catalyses ATP + H2O + 4 H(+)(in) = ADP + phosphate + 5 H(+)(out). Functionally, produces ATP from ADP in the presence of a proton gradient across the membrane. The alpha chain is a regulatory subunit. The chain is ATP synthase subunit alpha from Geobacillus sp. (strain WCH70).